The chain runs to 825 residues: Neuroligin-3 (825 aa).

Residues 1–34 (MWLQPSLSLSPTPTVGRSLCLTLGFLSLVLRAST) form the signal peptide. Residues 35–686 (QAPAPTVNTH…NPRDYSTELS (652 aa)) lie on the Extracellular side of the membrane. The N-linked (GlcNAc...) asparagine glycan is linked to N95. C103 and C138 form a disulfide bridge. A disordered region spans residues 151–172 (SGAKKQGEDLADNDGDEDEDIR). Positions 159 to 171 (DLADNDGDEDEDI) are enriched in acidic residues. 2 disulfide bridges follow: C317/C328 and C487/C521. N522 carries N-linked (GlcNAc...) asparagine glycosylation. Composition is skewed to polar residues over residues 622–633 (TKVPPPDTTHSS) and 654–666 (AYSN…SWNG). A disordered region spans residues 622 to 668 (TKVPPPDTTHSSHITRRPNGKTWSTKRPAISPAYSNENAPGSWNGDQ). The chain crosses the membrane as a helical span at residues 687-707 (VTIAVGASLLFLNVLAFAALY). Residues 708-825 (YRKDKRRQEP…LPHSHSTTRV (118 aa)) lie on the Cytoplasmic side of the membrane. S722 is subject to Phosphoserine. At Y769 the chain carries Phosphotyrosine.

This sequence belongs to the type-B carboxylesterase/lipase family. As to quaternary structure, homodimer, and heterodimer with NLGN1 and NLGN2. Interacts with neurexins NRXN1, NRXN2 and NRXN3. Interaction with neurexins is mediated by heparan sulfate glycan modification on neurexin. Interacts (via its C-terminus) with DLG4/PSD-95 (via PDZ domain 3). In terms of tissue distribution, brain and arteries (at protein level). Detected in heart, brain, spleen, lung, liver, skeletal muscle, kidney and testis. Expressed in olfactory bulb and olfactory epithelium. Found in olfactory ensheathing glia but not in olfactory neurons, and in developing peripheral glia.

The protein localises to the cell membrane. It localises to the synapse. Functionally, cell surface protein involved in cell-cell-interactions via its interactions with neurexin family members. Plays a role in synapse function and synaptic signal transmission, and probably mediates its effects by recruiting and clustering other synaptic proteins. May promote the initial formation of synapses, but is not essential for this. May also play a role in glia-glia or glia-neuron interactions in the developing peripheral nervous system. This Mus musculus (Mouse) protein is Neuroligin-3 (Nlgn3).